Consider the following 386-residue polypeptide: Phosphoglycerate kinase (386 aa).

Residues 21–23, R36, 59–62, R112, and R145 each bind substrate; these read DLN and HLGR. ATP is bound by residues K196, E313, and 339–342; that span reads GGDT.

Belongs to the phosphoglycerate kinase family. Monomer.

It localises to the cytoplasm. The enzyme catalyses (2R)-3-phosphoglycerate + ATP = (2R)-3-phospho-glyceroyl phosphate + ADP. It functions in the pathway carbohydrate degradation; glycolysis; pyruvate from D-glyceraldehyde 3-phosphate: step 2/5. In Haemophilus influenzae (strain PittGG), this protein is Phosphoglycerate kinase.